Reading from the N-terminus, the 193-residue chain is dTTP/UTP pyrophosphatase (193 aa).

D77 acts as the Proton acceptor in catalysis.

This sequence belongs to the Maf family. YhdE subfamily. The cofactor is a divalent metal cation.

The protein localises to the cytoplasm. It catalyses the reaction dTTP + H2O = dTMP + diphosphate + H(+). The enzyme catalyses UTP + H2O = UMP + diphosphate + H(+). Its function is as follows. Nucleoside triphosphate pyrophosphatase that hydrolyzes dTTP and UTP. May have a dual role in cell division arrest and in preventing the incorporation of modified nucleotides into cellular nucleic acids. The sequence is that of dTTP/UTP pyrophosphatase from Bacteroides thetaiotaomicron (strain ATCC 29148 / DSM 2079 / JCM 5827 / CCUG 10774 / NCTC 10582 / VPI-5482 / E50).